A 190-amino-acid chain; its full sequence is Potassium-transporting ATPase KdpC subunit (190 aa).

Residues 10–30 form a helical membrane-spanning segment; it reads TFIFLLLITGGVYPLLTTVLG.

It belongs to the KdpC family. In terms of assembly, the system is composed of three essential subunits: KdpA, KdpB and KdpC.

Its subcellular location is the cell inner membrane. Part of the high-affinity ATP-driven potassium transport (or Kdp) system, which catalyzes the hydrolysis of ATP coupled with the electrogenic transport of potassium into the cytoplasm. This subunit acts as a catalytic chaperone that increases the ATP-binding affinity of the ATP-hydrolyzing subunit KdpB by the formation of a transient KdpB/KdpC/ATP ternary complex. The sequence is that of Potassium-transporting ATPase KdpC subunit from Escherichia coli O139:H28 (strain E24377A / ETEC).